The following is a 459-amino-acid chain: Phosphomethylpyrimidine synthase (459 aa).

Substrate-binding positions include asparagine 80, methionine 109, tyrosine 139, histidine 175, 195–197 (SRG), 236–239 (DSLR), and glutamate 275. Histidine 279 is a binding site for Zn(2+). Tyrosine 302 serves as a coordination point for substrate. Histidine 343 is a binding site for Zn(2+). Residues cysteine 423, cysteine 426, and cysteine 431 each coordinate [4Fe-4S] cluster.

The protein belongs to the ThiC family. [4Fe-4S] cluster serves as cofactor.

The catalysed reaction is 5-amino-1-(5-phospho-beta-D-ribosyl)imidazole + S-adenosyl-L-methionine = 4-amino-2-methyl-5-(phosphooxymethyl)pyrimidine + CO + 5'-deoxyadenosine + formate + L-methionine + 3 H(+). It participates in cofactor biosynthesis; thiamine diphosphate biosynthesis. In terms of biological role, catalyzes the synthesis of the hydroxymethylpyrimidine phosphate (HMP-P) moiety of thiamine from aminoimidazole ribotide (AIR) in a radical S-adenosyl-L-methionine (SAM)-dependent reaction. This is Phosphomethylpyrimidine synthase from Synechocystis sp. (strain ATCC 27184 / PCC 6803 / Kazusa).